A 495-amino-acid polypeptide reads, in one-letter code: Glutamyl-tRNA(Gln) amidotransferase subunit A (495 aa).

Active-site charge relay system residues include Lys75 and Ser150. Ser174 functions as the Acyl-ester intermediate in the catalytic mechanism.

The protein belongs to the amidase family. GatA subfamily. Heterotrimer of A, B and C subunits.

It carries out the reaction L-glutamyl-tRNA(Gln) + L-glutamine + ATP + H2O = L-glutaminyl-tRNA(Gln) + L-glutamate + ADP + phosphate + H(+). In terms of biological role, allows the formation of correctly charged Gln-tRNA(Gln) through the transamidation of misacylated Glu-tRNA(Gln) in organisms which lack glutaminyl-tRNA synthetase. The reaction takes place in the presence of glutamine and ATP through an activated gamma-phospho-Glu-tRNA(Gln). This chain is Glutamyl-tRNA(Gln) amidotransferase subunit A, found in Paraburkholderia xenovorans (strain LB400).